A 427-amino-acid polypeptide reads, in one-letter code: Adenylosuccinate synthetase (427 aa).

GTP-binding positions include 12–18 (GDEGKGK) and 40–42 (GHT). Aspartate 13 (proton acceptor) is an active-site residue. Mg(2+)-binding residues include aspartate 13 and glycine 40. IMP-binding positions include 13-16 (DEGK), 38-41 (NAGH), threonine 131, arginine 145, glutamine 226, threonine 241, and arginine 305. Catalysis depends on histidine 41, which acts as the Proton donor. Position 301-307 (301-307 (ATTGRKR)) interacts with substrate. Residues arginine 307, 333 to 335 (KLD), and 415 to 417 (SVG) contribute to the GTP site.

The protein belongs to the adenylosuccinate synthetase family. Homodimer. Mg(2+) is required as a cofactor.

The protein resides in the cytoplasm. The catalysed reaction is IMP + L-aspartate + GTP = N(6)-(1,2-dicarboxyethyl)-AMP + GDP + phosphate + 2 H(+). Its pathway is purine metabolism; AMP biosynthesis via de novo pathway; AMP from IMP: step 1/2. Plays an important role in the de novo pathway of purine nucleotide biosynthesis. Catalyzes the first committed step in the biosynthesis of AMP from IMP. This Oleidesulfovibrio alaskensis (strain ATCC BAA-1058 / DSM 17464 / G20) (Desulfovibrio alaskensis) protein is Adenylosuccinate synthetase.